A 493-amino-acid chain; its full sequence is MNVRVRFAPSPTGFVHIGSLRTALYNYLFAKKMGGEYILRVEDTDQSRLVEGAIENMLNAMKWAGVNHSEGVILDDSGKVVQKGEYGPYIQSQRLDIYQEYIKQLLDSGKAYYCFCTKERLDEVRDAQRAAGETAKYDGHCKNLSKEEVEANIKAGIPYVIRLRLPENHTIKFTDLVRGDMEFNTNDLDDQVLMKTDGFPTYHFAVVVDDYLMKITHVIRGEEWVSSTPKHVYLYEAFGWEAPVFVHLPNILNKEKKKLSKRQGDVAVEDFKKKGYLPEGLVNYVALVGWSPEDNQELFTMEELEKAFSVERVSKSGGVFDTEKLNWVNQHYIKDGDDAYLTDLAIPFLIEDGFITEEEATNKYDFLKSMISVLKEKLQYVKEVTEHASIFFGDKIEVETEEGREFLRLEHIPTLIDALREKIEKTEVLNAEFVQAMLKEIQKEYKIKGKNLFMGSRIILTGQMHGPDLPKVMEVLGKETCLNRIAYVKNNIL.

Positions 9 to 19 (PSPTGFVHIGS) match the 'HIGH' region motif. The 'KMSKS' region signature appears at 258–262 (KLSKR). Residue Lys261 participates in ATP binding.

Belongs to the class-I aminoacyl-tRNA synthetase family. Glutamate--tRNA ligase type 1 subfamily. Monomer.

The protein localises to the cytoplasm. It carries out the reaction tRNA(Glu) + L-glutamate + ATP = L-glutamyl-tRNA(Glu) + AMP + diphosphate. Its function is as follows. Catalyzes the attachment of glutamate to tRNA(Glu) in a two-step reaction: glutamate is first activated by ATP to form Glu-AMP and then transferred to the acceptor end of tRNA(Glu). The polypeptide is Glutamate--tRNA ligase (Clostridioides difficile (strain 630) (Peptoclostridium difficile)).